A 272-amino-acid chain; its full sequence is Anamorsin homolog (272 aa).

The N-terminal SAM-like domain stretch occupies residues 1–156 (MDSMMNQKTV…KIGSSFALKK (156 aa)). Residues 157 to 185 (PVTNLFKIDLDDDVDLIDEDSLLTEEDLM) form a linker region. [2Fe-2S] cluster contacts are provided by C195, C202, C205, and C207. The fe-S binding site A stretch occupies residues 195–207 (CETTKKACKNCVC). Positions 233, 236, 244, and 247 each coordinate [4Fe-4S] cluster. Short sequence motifs (cx2C motif) lie at residues 233 to 236 (CGSC) and 244 to 247 (CGTC). Positions 233-247 (CGSCGLGDAFRCGTC) are fe-S binding site B.

Belongs to the anamorsin family. As to quaternary structure, monomer. Interacts with ATR3. The cofactor is [2Fe-2S] cluster. [4Fe-4S] cluster is required as a cofactor.

It is found in the cytoplasm. It localises to the mitochondrion intermembrane space. Functionally, component of the cytosolic iron-sulfur (Fe-S) protein assembly (CIA) machinery. Required for the maturation of extramitochondrial Fe-S proteins. Part of an electron transfer chain functioning in an early step of cytosolic Fe-S biogenesis, facilitating the de novo assembly of a [4Fe-4S] cluster on the cytosolic Fe-S scaffold complex. Electrons are transferred from NADPH via FAD- and FMN-containing diflavin oxidoreductase TAH18/ATR3. Together with the diflavin oxidoreductase, also required for the assembly of the diferric tyrosyl radical cofactor of ribonucleotide reductase (RNR), probably by providing electrons for reduction during radical cofactor maturation in the catalytic small subunit. Required for embryo development. The sequence is that of Anamorsin homolog from Arabidopsis thaliana (Mouse-ear cress).